The primary structure comprises 420 residues: Serine hydroxymethyltransferase (420 aa).

(6S)-5,6,7,8-tetrahydrofolate contacts are provided by residues Leu-121 and 125-127 (GHL). An N6-(pyridoxal phosphate)lysine modification is found at Lys-230. Residues Glu-246 and 354-356 (SPF) each bind (6S)-5,6,7,8-tetrahydrofolate.

The protein belongs to the SHMT family. Homodimer. The cofactor is pyridoxal 5'-phosphate.

It localises to the cytoplasm. The enzyme catalyses (6R)-5,10-methylene-5,6,7,8-tetrahydrofolate + glycine + H2O = (6S)-5,6,7,8-tetrahydrofolate + L-serine. It participates in one-carbon metabolism; tetrahydrofolate interconversion. Its pathway is amino-acid biosynthesis; glycine biosynthesis; glycine from L-serine: step 1/1. Functionally, catalyzes the reversible interconversion of serine and glycine with tetrahydrofolate (THF) serving as the one-carbon carrier. This reaction serves as the major source of one-carbon groups required for the biosynthesis of purines, thymidylate, methionine, and other important biomolecules. Also exhibits THF-independent aldolase activity toward beta-hydroxyamino acids, producing glycine and aldehydes, via a retro-aldol mechanism. This is Serine hydroxymethyltransferase from Rickettsia massiliae (strain Mtu5).